A 109-amino-acid polypeptide reads, in one-letter code: Thioredoxin (109 aa).

Residues 2 to 109 (TNCIVELTDG…LKDFLNLYLK (108 aa)) form the Thioredoxin domain. Cysteine 33 and cysteine 36 are oxidised to a cystine.

This sequence belongs to the thioredoxin family.

In terms of biological role, participates in various redox reactions through the reversible oxidation of its active center dithiol to a disulfide and catalyzes dithiol-disulfide exchange reactions. The chain is Thioredoxin (trxA) from Buchnera aphidicola subsp. Baizongia pistaciae (strain Bp).